Reading from the N-terminus, the 340-residue chain is UDP-3-O-acylglucosamine N-acyltransferase (340 aa).

The active-site Proton acceptor is the His-237.

It belongs to the transferase hexapeptide repeat family. LpxD subfamily. In terms of assembly, homotrimer.

It catalyses the reaction a UDP-3-O-[(3R)-3-hydroxyacyl]-alpha-D-glucosamine + a (3R)-hydroxyacyl-[ACP] = a UDP-2-N,3-O-bis[(3R)-3-hydroxyacyl]-alpha-D-glucosamine + holo-[ACP] + H(+). Its pathway is bacterial outer membrane biogenesis; LPS lipid A biosynthesis. In terms of biological role, catalyzes the N-acylation of UDP-3-O-acylglucosamine using 3-hydroxyacyl-ACP as the acyl donor. Is involved in the biosynthesis of lipid A, a phosphorylated glycolipid that anchors the lipopolysaccharide to the outer membrane of the cell. The protein is UDP-3-O-acylglucosamine N-acyltransferase of Desulfosudis oleivorans (strain DSM 6200 / JCM 39069 / Hxd3) (Desulfococcus oleovorans).